Consider the following 161-residue polypeptide: Cyclic pyranopterin monophosphate synthase (161 aa).

Residues 73–75 (LCH) and 110–111 (ME) contribute to the substrate site. The active site involves Asp-125.

It belongs to the MoaC family. In terms of assembly, homohexamer; trimer of dimers.

It carries out the reaction (8S)-3',8-cyclo-7,8-dihydroguanosine 5'-triphosphate = cyclic pyranopterin phosphate + diphosphate. It participates in cofactor biosynthesis; molybdopterin biosynthesis. Functionally, catalyzes the conversion of (8S)-3',8-cyclo-7,8-dihydroguanosine 5'-triphosphate to cyclic pyranopterin monophosphate (cPMP). In Pseudomonas syringae pv. syringae (strain B728a), this protein is Cyclic pyranopterin monophosphate synthase.